The primary structure comprises 319 residues: MLTQTRVALRVLKNAHLTLPKRNISQSPALSMRLVQFQSSDSPSPRIGLELQDGGNIIDLNAYDPSLPCRMREFLEMGESALQTAKSALDSNQHILSRSNISLLAPITNPEKIICIGMNYVDHCLEQNVPVPKEPIIFNKFASSIVGPSDPIRIPEESQEVDWEAELAFVIGKKGKNIKEEDAMDHVVGYTVAHDVSARDWQMKKNGKQWLLGKTFDTFCPLGPALVTKDVISDPHNLGIRCRVNGDLVQNSNTNQMVFKTEALIAWASKFVTLNPGDVFLTGTPPGVGVFRKPPVFLKAGDVVRCEIDELGAISNPVV.

Residues Met-1–Ser-31 constitute a mitochondrion transit peptide. Mg(2+) is bound by residues Glu-164, Glu-166, and Asp-195.

This sequence belongs to the FAH family. It depends on Mg(2+) as a cofactor. The cofactor is Mn(2+).

The protein resides in the mitochondrion. It carries out the reaction oxaloacetate = enol-oxaloacetate. Its function is as follows. Tautomerase that converts enol-oxaloacetate, a strong inhibitor of succinate dehydrogenase, to the physiological keto form of oxaloacetate. It is thereby required to maximize aerobic respiration efficiency by preventing succinate dehydrogenase inhibition. The chain is Oxaloacetate tautomerase fahd2, mitochondrial (fahd2) from Xenopus laevis (African clawed frog).